We begin with the raw amino-acid sequence, 399 residues long: Probable peptidoglycan glycosyltransferase FtsW (399 aa).

Transmembrane regions (helical) follow at residues 19 to 39 (PLPV…VMIS), 61 to 81 (ILFA…PVSW), 85 to 105 (SGWL…TPLG), 114 to 134 (WIPM…CLIA), 160 to 180 (VLGV…TVVL), 198 to 218 (FMPL…TQPY), 285 to 305 (LLGA…GLVI), 314 to 334 (MAFG…QAGI), and 350 to 370 (LPLV…IAVI).

Belongs to the SEDS family. FtsW subfamily.

It is found in the cell inner membrane. It catalyses the reaction [GlcNAc-(1-&gt;4)-Mur2Ac(oyl-L-Ala-gamma-D-Glu-L-Lys-D-Ala-D-Ala)](n)-di-trans,octa-cis-undecaprenyl diphosphate + beta-D-GlcNAc-(1-&gt;4)-Mur2Ac(oyl-L-Ala-gamma-D-Glu-L-Lys-D-Ala-D-Ala)-di-trans,octa-cis-undecaprenyl diphosphate = [GlcNAc-(1-&gt;4)-Mur2Ac(oyl-L-Ala-gamma-D-Glu-L-Lys-D-Ala-D-Ala)](n+1)-di-trans,octa-cis-undecaprenyl diphosphate + di-trans,octa-cis-undecaprenyl diphosphate + H(+). Its pathway is cell wall biogenesis; peptidoglycan biosynthesis. Its function is as follows. Peptidoglycan polymerase that is essential for cell division. The polypeptide is Probable peptidoglycan glycosyltransferase FtsW (Marinobacter nauticus (strain ATCC 700491 / DSM 11845 / VT8) (Marinobacter aquaeolei)).